The chain runs to 1025 residues: Presequence protease, mitochondrial (1025 aa).

Residue histidine 90 coordinates Zn(2+). The Proton acceptor role is filled by glutamate 93. Position 94 (histidine 94) interacts with Zn(2+). The active site involves glutamate 166. Glutamate 197 serves as a coordination point for Zn(2+).

Belongs to the peptidase M16 family. PreP subfamily. As to quaternary structure, monomer and homodimer; homodimerization is induced by binding of the substrate. Zn(2+) serves as cofactor.

It localises to the mitochondrion intermembrane space. It is found in the mitochondrion matrix. Degrades mitochondrial transit peptides after their cleavage in the intermembrane space or in the matrix, and presequence peptides; clearance of these peptides is required to keep the presequence processing machinery running. Preferentially cleaves the N-terminal side of paired basic amino acid residues. Also degrades other unstructured peptides. May function as an ATP-dependent peptidase as opposed to a metalloendopeptidase. This chain is Presequence protease, mitochondrial (cym1), found in Aspergillus oryzae (strain ATCC 42149 / RIB 40) (Yellow koji mold).